The sequence spans 310 residues: Malate dehydrogenase (310 aa).

Residues 7 to 13 and aspartate 34 contribute to the NAD(+) site; that span reads GAAGGIG. Residues arginine 81 and arginine 87 each contribute to the substrate site. Residues asparagine 94 and 117-119 each bind NAD(+); that span reads ITN. 2 residues coordinate substrate: asparagine 119 and arginine 153. The Proton acceptor role is filled by histidine 177. Methionine 227 provides a ligand contact to NAD(+).

It belongs to the LDH/MDH superfamily. MDH type 1 family. In terms of assembly, homodimer.

The enzyme catalyses (S)-malate + NAD(+) = oxaloacetate + NADH + H(+). Functionally, catalyzes the reversible oxidation of malate to oxaloacetate. The sequence is that of Malate dehydrogenase from Pseudoalteromonas translucida (strain TAC 125).